A 521-amino-acid chain; its full sequence is Maturase K (521 aa).

Belongs to the intron maturase 2 family. MatK subfamily.

It is found in the plastid. The protein resides in the chloroplast. Usually encoded in the trnK tRNA gene intron. Probably assists in splicing its own and other chloroplast group II introns. In Trillium catesbaei (Catesby's trillium), this protein is Maturase K.